An 835-amino-acid chain; its full sequence is Leucine--tRNA ligase (835 aa).

A 'HIGH' region motif is present at residues 44–54 (PYPSGNIHMGH). Positions 587-591 (KMSKS) match the 'KMSKS' region motif. Lysine 590 contacts ATP.

The protein belongs to the class-I aminoacyl-tRNA synthetase family.

The protein resides in the cytoplasm. The catalysed reaction is tRNA(Leu) + L-leucine + ATP = L-leucyl-tRNA(Leu) + AMP + diphosphate. The sequence is that of Leucine--tRNA ligase from Lawsonia intracellularis (strain PHE/MN1-00).